Here is a 103-residue protein sequence, read N- to C-terminus: Large ribosomal subunit protein bL21 (103 aa).

The protein belongs to the bacterial ribosomal protein bL21 family. In terms of assembly, part of the 50S ribosomal subunit. Contacts protein L20.

This protein binds to 23S rRNA in the presence of protein L20. This is Large ribosomal subunit protein bL21 from Marinobacter nauticus (strain ATCC 700491 / DSM 11845 / VT8) (Marinobacter aquaeolei).